A 1631-amino-acid chain; its full sequence is ABC transporter A family member 6 (1631 aa).

7 helical membrane passes run 25 to 45 (ICCEIVFPIVIIGVLFAILAL), 242 to 262 (SVFITAALMMFSFRLVTDVVI), 285 to 305 (SWIITSLITSLPVTLLIVVIF), 317 to 337 (GIVIITFVLYLITLLLLSFIF), 346 to 366 (FCGLLSFVIVIAINICGIFVS), 372 to 392 (VSVKLLLSIFSPIAFSNSIYI), and 416 to 436 (ILMLGIDIIIYIILIWYFEKV). One can recognise an ABC transporter 1 domain in the interval 491-724 (ISIRNLRKEF…FGQGYLLTCN (234 aa)). 527-534 (GPNGCGKS) contributes to the ATP binding site. Transmembrane regions (helical) follow at residues 866–886 (SFFLSIILPMALIIGSIILYK), 1047–1067 (AIIYFVFILMAGFSLMAGSFA), 1099–1119 (WDFFFAFIISILSCSILAGVI), 1127–1147 (FGSFLLCLILLSCAIIPLGYL), 1158–1178 (AVGAITAILFVFGLVFTIASL), 1198–1218 (IIDLIFSIISPIFALNRIVFI), and 1242–1262 (LGTPLIVLAGHAVLWNVWILL). Positions 1309 to 1544 (IQFKNLHKLF…FGAGYSIDVK (236 aa)) constitute an ABC transporter 2 domain. 1347–1354 (GLNGGGKS) is a binding site for ATP.

This sequence belongs to the ABC transporter superfamily. ABCA family.

It localises to the membrane. The protein is ABC transporter A family member 6 (abcA6) of Dictyostelium discoideum (Social amoeba).